Consider the following 414-residue polypeptide: Serine/arginine-rich splicing factor SR45 (414 aa).

Disordered stretches follow at residues 1–95 (MAKP…KAVQ) and 175–414 (LPPR…PRKT). Low complexity-rich tracts occupy residues 10-34 (SPSV…SRSI) and 42-60 (RSLS…GSRS). Positions 62 to 69 (PRRGKSPA) match the Nuclear localization signal 1 motif. A Phosphoserine modification is found at serine 77. An RRM domain is found at 98–176 (LVLHVDSLSR…KVVKATFTLP (79 aa)). Residues 176-191 (PPRQKVSSPPKPVSAA) are compositionally biased toward low complexity. A compositionally biased stretch (basic and acidic residues) spans 205–220 (DAEKDGGPRRPRETSP). The interval 218 to 219 (TS) is required for isoform 1 function in petal development. Over residues 228 to 243 (PRRRSPLPRRGLSPRR) the composition is skewed to basic residues. The Nuclear localization signal 2 signature appears at 229-236 (RRRSPLPR). Serine 256 carries the phosphoserine modification. Short sequence motifs (nuclear localization signal) lie at residues 284–291 (PRRYRSPP), 318–325 (PRRLRSPP), and 338–345 (IRRPGRSR). 2 stretches are compositionally biased toward basic residues: residues 285-343 (RRYR…RPGR) and 352-363 (RKGRGPAGRRGR). Positions 364–373 (SSSYSSSPSP) are enriched in low complexity. Positions 373–380 (PRRIPRKI) match the Nuclear localization signal 6 motif. The span at 375–394 (RIPRKISRSRSPKRPLRGKR) shows a compositional bias: basic residues. Over residues 404–414 (SPPPPPPPRKT) the composition is skewed to pro residues.

It belongs to the splicing factor SR family. SR45 subfamily. In terms of assembly, component of the spliceosome. Interacts with AFC2, U2AF35A, U2AF35B, RNU1, SCL33 and SKIP. The interaction with AFC2 depends on phosphorylation status. Interaction with RNU1 defines initial 5' splice sites and interaction with U2AF35B 3' splice sites in the early stage of spliceosome assembly. In terms of processing, phosphorylated by AFC2. The phosphorylation status regulates intranuclear distribution. Especially present in actively growing regions and dividing cells. Mostly expressed in roots (primary and secondary root meristem), shoot apical meristem (SAM), leaf primordia, pollen and inflorescence, and, to a lower extent, in leaves, vascular tissue, hydathode and fruits.

Its subcellular location is the nucleus speckle. It is found in the nucleus. The protein localises to the nucleoplasm. Functionally, involved in 5' and 3' splicing site selection of introns, and may bridge the 5' and 3' components of the spliceosome. Isoform 1 is required during flower petal development and isoform 2 is involved in root growth. Negatively regulates glucose and abscisic acid (ABA) signaling during early seedling development. Involved in the RNA-directed DNA methylation pathway. Modulates KIN10 stability in response to sugars, probably through the splicing regulation of 5PTASE13, a protein implicated in the proteasomal degradation of KIN10. The protein is Serine/arginine-rich splicing factor SR45 of Arabidopsis thaliana (Mouse-ear cress).